Consider the following 453-residue polypeptide: Major fimbrium subunit FimC (453 aa).

An N-terminal signal peptide occupies residues 1-28 (MKMKYFHHPSGLLPRLLLLLLLTMGAVA). The N-palmitoyl cysteine moiety is linked to residue Cys29. Cys29 carries S-diacylglycerol cysteine lipidation. The propeptide occupies 29-56 (CTKEDNPDQPTSDEVATVKMSLDDVEMR).

This sequence belongs to the bacteroidetes fimbrillin superfamily. FimA/Mfa1 family. As to quaternary structure, fimbriae are composed of a major, structural subunit and the minor components FimC, FimD and FimE. Identified in a complex composed of FimC, FimD and FimE (in vitro). The complex interacts with host extracellular matrix proteins, including fibronectin and type I collagen. Interacts with host CXCR4.

The protein resides in the fimbrium. It is found in the cell outer membrane. Minor component of fimbriae. These long, filamentous pili are attached to the cell surface; they mediate biofilm formation, adhesion onto host cells and onto other bacteria that are part of the oral microbiome. They play an important role in invasion of periodontal tissues and are major virulence factors. FimC, FimD and FimE contribute to interaction with host CXCR4 and thereby down-regulate the TLR2-mediated host immune response. The chain is Major fimbrium subunit FimC from Porphyromonas gingivalis (strain ATCC 33277 / DSM 20709 / CIP 103683 / JCM 12257 / NCTC 11834 / 2561).